The sequence spans 599 residues: Sulfite reductase [NADPH] flavoprotein alpha-component (599 aa).

Positions 64–202 constitute a Flavodoxin-like domain; it reads ITIISASQTG…AASEWRARVV (139 aa). FMN contacts are provided by residues 70 to 75, 117 to 120, and 153 to 162; these read SQTGNA, STQG, and LGDSSYEFFC. Residues 234–448 form the FAD-binding FR-type domain; that stretch reads DAPLVASLSV…IEHNDNFRLP (215 aa). FAD is bound by residues Thr322, Ala356, 386 to 389, 404 to 406, Tyr410, and 419 to 422; these read RLYS, TVG, and GGAS. NADP(+) is bound by residues 519-520, 525-529, and Asp561; these read SR and KVYVQ. FAD is bound at residue Tyr599.

It belongs to the NADPH-dependent sulphite reductase flavoprotein subunit CysJ family. The protein in the N-terminal section; belongs to the flavodoxin family. This sequence in the C-terminal section; belongs to the flavoprotein pyridine nucleotide cytochrome reductase family. In terms of assembly, alpha(8)-beta(8). The alpha component is a flavoprotein, the beta component is a hemoprotein. FAD serves as cofactor. Requires FMN as cofactor.

The catalysed reaction is hydrogen sulfide + 3 NADP(+) + 3 H2O = sulfite + 3 NADPH + 4 H(+). It participates in sulfur metabolism; hydrogen sulfide biosynthesis; hydrogen sulfide from sulfite (NADPH route): step 1/1. Its function is as follows. Component of the sulfite reductase complex that catalyzes the 6-electron reduction of sulfite to sulfide. This is one of several activities required for the biosynthesis of L-cysteine from sulfate. The flavoprotein component catalyzes the electron flow from NADPH -&gt; FAD -&gt; FMN to the hemoprotein component. The chain is Sulfite reductase [NADPH] flavoprotein alpha-component from Shigella dysenteriae serotype 1 (strain Sd197).